A 442-amino-acid polypeptide reads, in one-letter code: Histidine--tRNA ligase (442 aa).

The protein belongs to the class-II aminoacyl-tRNA synthetase family. In terms of assembly, homodimer.

The protein localises to the cytoplasm. The catalysed reaction is tRNA(His) + L-histidine + ATP = L-histidyl-tRNA(His) + AMP + diphosphate + H(+). This Helicobacter hepaticus (strain ATCC 51449 / 3B1) protein is Histidine--tRNA ligase.